Here is a 467-residue protein sequence, read N- to C-terminus: Protein PHOSPHATE STARVATION RESPONSE 3 (467 aa).

The disordered stretch occupies residues 227 to 266 (MSLPVSSCSDQEDLQDARSPAKVQLSSSRSSSGTASCNKP). In terms of domain architecture, HTH myb-type spans 262–322 (SCNKPRLRWT…HLQKYRLAKY (61 aa)). Positions 293–318 (PKGVLKLMKVEGLTIYHIKSHLQKYR) form a DNA-binding region, H-T-H motif. Residues 327–337 (KEDKKQEEKKT) are compositionally biased toward basic and acidic residues. Disordered stretches follow at residues 327 to 353 (KEDK…KSAQ) and 400 to 467 (RESI…VHDE). A compositionally biased stretch (polar residues) spans 402–412 (SISSMTSTTEG). Basic and acidic residues-rich tracts occupy residues 419 to 428 (PMEKTEDKAE) and 438 to 467 (RITD…VHDE).

As to expression, expressed in the root cap and in the exodermis of the root, in the root tip of lateral roots, in the mesophyll cells of the leaf, in pollen, vascular cylinder of the anther and the veins of the lemma, palea and pistils, and in the xylem and phloem regions of large vascular bundles, small vascular bundles and diffuse vascular bundles in node I.

Its subcellular location is the nucleus. Functionally, transcription factor involved in phosphate starvation signaling. Binds to P1BS, an imperfect palindromic sequence 5'-GNATATNC-3', to promote the expression of inorganic phosphate (Pi) starvation-responsive genes. Functionally redundant with PHR1 and PHR2 in regulating Pi starvation response and Pi homeostasis. This Oryza sativa subsp. japonica (Rice) protein is Protein PHOSPHATE STARVATION RESPONSE 3.